We begin with the raw amino-acid sequence, 386 residues long: MEIFTTTRGTSAGPEPAPGGHGGTDSPRTSDLSLRALTGCVLCILIVSTLLGNALVCAAVIKFRHLRSKVTNAFVISLAVSDLFVAVLVMPWRAVSEVAGVWLFGAFCDTWVAFDIMCSTASILHLCIISMDRYWAISSPFRYERRMTPRFGCVMIGVAWTLSVLISFIPVQLNWHARGRERTDPGDCNASLNRTYAISSSLISFYIPVLIMVGTYTRIFRIGRTQIRRISSLERAAPRATRGPALCDEESSLKTSFRRETKVLKTLSVIMGVFVFCWLPFFVLNCMVPFCRLEPAAAPCVSDTTFSVFVWFGWANSSLNPVIYAFNADFRKAFSTILGCSRYCRTSAVEAVDFSNELASYHHDTTLQKEASSRGNSRGGPYQFAL.

The span at 1–10 (MEIFTTTRGT) shows a compositional bias: polar residues. Residues 1–28 (MEIFTTTRGTSAGPEPAPGGHGGTDSPR) form a disordered region. At 1–35 (MEIFTTTRGTSAGPEPAPGGHGGTDSPRTSDLSLR) the chain is on the extracellular side. Residues 36–56 (ALTGCVLCILIVSTLLGNALV) traverse the membrane as a helical segment. Topologically, residues 57–72 (CAAVIKFRHLRSKVTN) are cytoplasmic. The helical transmembrane segment at 73 to 92 (AFVISLAVSDLFVAVLVMPW) threads the bilayer. The Extracellular portion of the chain corresponds to 93 to 109 (RAVSEVAGVWLFGAFCD). A disulfide bond links Cys-108 and Cys-188. A helical membrane pass occupies residues 110–131 (TWVAFDIMCSTASILHLCIISM). At 132–150 (DRYWAISSPFRYERRMTPR) the chain is on the cytoplasmic side. A helical membrane pass occupies residues 151 to 175 (FGCVMIGVAWTLSVLISFIPVQLNW). Residues 176–195 (HARGRERTDPGDCNASLNRT) are Extracellular-facing. Residues Asn-189 and Asn-193 are each glycosylated (N-linked (GlcNAc...) asparagine). Residues 196–220 (YAISSSLISFYIPVLIMVGTYTRIF) form a helical membrane-spanning segment. Residues 221-266 (RIGRTQIRRISSLERAAPRATRGPALCDEESSLKTSFRRETKVLKT) are Cytoplasmic-facing. Residues 267–292 (LSVIMGVFVFCWLPFFVLNCMVPFCR) traverse the membrane as a helical segment. Over 293–305 (LEPAAAPCVSDTT) the chain is Extracellular. Residues 306 to 325 (FSVFVWFGWANSSLNPVIYA) form a helical membrane-spanning segment. Residues 326–386 (FNADFRKAFS…SRGGPYQFAL (61 aa)) lie on the Cytoplasmic side of the membrane.

It belongs to the G-protein coupled receptor 1 family.

It localises to the cell membrane. Its subcellular location is the cell projection. The protein resides in the cilium membrane. Its function is as follows. This is one of the five types (D1 to D5) of receptors for dopamine. The activity of this receptor is mediated by G proteins which activate adenylyl cyclase. This is D(1)-like dopamine receptor from Oreochromis mossambicus (Mozambique tilapia).